The following is a 1299-amino-acid chain: Cilia- and flagella-associated protein 251 (1299 aa).

Residues 1 to 351 form a disordered region; that stretch reads MSDTEENPLE…SQKPEDILAQ (351 aa). Composition is skewed to acidic residues over residues 17–45, 91–162, and 176–189; these read EMEEEKEEKKEEEEEEEEGEKEKEEEEEE, EKEE…EEDA, and ESQEDGEGLEEWVE. Over residues 190 to 199 the composition is skewed to basic and acidic residues; the sequence is KEEQREGEEV. The segment covering 212-228 has biased composition (acidic residues); the sequence is EEEGWEEEKSGEEEKSE. Residues 229 to 257 show a composition bias toward basic and acidic residues; the sequence is ESERSKERGGEEEGQEKEEAEHEGEREEG. Positions 269–280 are enriched in acidic residues; it reads REEEEEEEDTET. Basic and acidic residues-rich tracts occupy residues 281 to 297 and 331 to 351; these read TETKAGRAKEEKKEKQN and NSMKVDDTEEASQKPEDILAQ. 14 WD repeats span residues 484–526, 534–574, 585–624, 643–678, 681–741, 745–785, 791–828, 838–874, 881–924, 935–975, 981–1027, 1033–1071, 1109–1149, and 1169–1209; these read PVHT…IWKW, ACTL…CWFE, VLTEKTFNKLVGKFSQSVFHLKLPQVLSATKEGKLVVWDI, PRKLVHLQKEAITVLMTIDSYIVTGDIKGNIKFYDH, SVVN…VYHM, GTKL…VWDF, LFSRTFEKGLGVQCLTYNPEGALLGAGFTEGTVYILDA, PFKYSKSSVSHCCFSHDSNYMATADVNFTVAVYMVVV, WEYL…EYNL, LDVH…LFNA, RKTL…ILPV, KTCAIVCHPNGVAGMALSYDGRFAFTAGGQDRSVVQWKI, YFYY…FYPS, and GKLI…GYTN.

Its subcellular location is the cytoplasm. It localises to the cytoskeleton. It is found in the cilium axoneme. The protein resides in the cell projection. The protein localises to the cilium. Its subcellular location is the flagellum. In terms of biological role, involved in spermatozoa motility. May also regulate cilium motility through its role in the assembly of the axonemal radial spokes. The chain is Cilia- and flagella-associated protein 251 from Mus musculus (Mouse).